Consider the following 234-residue polypeptide: Large ribosomal subunit protein uL1 (234 aa).

It belongs to the universal ribosomal protein uL1 family. Part of the 50S ribosomal subunit.

Its function is as follows. Binds directly to 23S rRNA. The L1 stalk is quite mobile in the ribosome, and is involved in E site tRNA release. Functionally, protein L1 is also a translational repressor protein, it controls the translation of the L11 operon by binding to its mRNA. Peptides originating from the N-terminal end of L1 have antibacterial activity against bacteria such as E.coli and B.megaterium and modest antifungal activities. Has no effect on H.pylori itself. Peptides are not hemolytic against mammalian cells. These peptides may be released in the stomach during altruistic lysis to kill other fast growing bacteria. This Helicobacter pylori (strain ATCC 700392 / 26695) (Campylobacter pylori) protein is Large ribosomal subunit protein uL1.